The chain runs to 506 residues: Exopolyphosphatase (506 aa).

The protein belongs to the GppA/Ppx family. As to quaternary structure, homodimer. The cofactor is Mg(2+).

It is found in the cell membrane. The catalysed reaction is [phosphate](n) + H2O = [phosphate](n-1) + phosphate + H(+). It carries out the reaction [phosphate](n) + ATP = [phosphate](n+1) + ADP. With respect to regulation, exopolyphosphatase activity is stimulated by NH(4)(+) and K(+). Phosphotransferase activity is insensitive to the addition of K(+) or NH(4)(+) ions. In terms of biological role, degradation of inorganic polyphosphates (polyP). Releases orthophosphate processively from the ends of the polyP chain. Also has polyphosphate:ADP phosphotransferase activity, catalyzing the production of ATP from ADP and polyP. The chain is Exopolyphosphatase from Pseudomonas aeruginosa (strain ATCC 15692 / DSM 22644 / CIP 104116 / JCM 14847 / LMG 12228 / 1C / PRS 101 / PAO1).